The primary structure comprises 167 residues: Biotin carboxyl carrier protein of acetyl-CoA carboxylase (167 aa).

Residues 53-91 (SGFSQERPIPTDPKKDTIKETTTENSETSTTTSSGDFIS) are disordered. Residues 64–74 (DPKKDTIKETT) are compositionally biased toward basic and acidic residues. Over residues 75–86 (TENSETSTTTSS) the composition is skewed to low complexity. The Biotinyl-binding domain occupies 87-163 (GDFISSPLVG…QFGSKLFRIA (77 aa)). An N6-biotinyllysine modification is found at Lys-129.

Homodimer.

It participates in lipid metabolism; fatty acid biosynthesis. This protein is a component of the acetyl coenzyme A carboxylase complex; first, biotin carboxylase catalyzes the carboxylation of the carrier protein and then the transcarboxylase transfers the carboxyl group to form malonyl-CoA. The protein is Biotin carboxyl carrier protein of acetyl-CoA carboxylase (accB) of Chlamydia pneumoniae (Chlamydophila pneumoniae).